The chain runs to 559 residues: Alpha-(1,6)-fucosyltransferase (559 aa).

Residues 1-4 (MLKC) are Cytoplasmic-facing. A helical; Signal-anchor for type II membrane protein transmembrane segment spans residues 5–24 (IAAVGTVVWMTMFLFLYSQL). The Lumenal segment spans residues 25–559 (SNNQSGGDSI…RKFKFEALLD (535 aa)). N-linked (GlcNAc...) asparagine glycosylation occurs at N27. A compositionally biased stretch (basic and acidic residues) spans 63-74 (QERNDQHKKIME). The tract at residues 63–90 (QERNDQHKKIMEQSHQLPPNPENPSLPK) is disordered. A compositionally biased stretch (pro residues) spans 80–90 (PPNPENPSLPK). N134 is a glycosylation site (N-linked (GlcNAc...) asparagine). 3 disulfide bridges follow: C188-C251, C196-C214, and C202-C206. One can recognise a GT23 domain in the interval 190–480 (EAKTLVCNLD…ADDGSKFHSL (291 aa)). The segment at 351–352 (RR) is important for donor substrate binding. Residues C452 and C459 are joined by a disulfide bond. The SH3 domain maps to 489–550 (QQAHEVIVIE…PSYKVVNDWR (62 aa)).

This sequence belongs to the glycosyltransferase 23 family. It depends on Mn(2+) as a cofactor. The cofactor is Mg(2+).

The protein localises to the golgi apparatus. The protein resides in the golgi stack membrane. The catalysed reaction is N(4)-{beta-D-GlcNAc-(1-&gt;2)-alpha-D-Man-(1-&gt;3)-[beta-D-GlcNAc-(1-&gt;2)-alpha-D-Man-(1-&gt;6)]-beta-D-Man-(1-&gt;4)-beta-D-GlcNAc-(1-&gt;4)-beta-D-GlcNAc}-L-asparaginyl-[protein] + GDP-beta-L-fucose = an N(4)-{beta-D-GlcNAc-(1-&gt;2)-alpha-D-Man-(1-&gt;3)-[beta-D-GlcNAc-(1-&gt;2)-alpha-D-Man-(1-&gt;6)]-beta-D-Man-(1-&gt;4)-beta-D-GlcNAc-(1-&gt;4)-[alpha-L-Fuc-(1-&gt;6)]-beta-D-GlcNAc}-L-asparaginyl-[protein] + GDP + H(+). The protein operates within protein modification; protein glycosylation. With respect to regulation, inhibited by Fe(3+), Ni(2+) and Cu(2+). Functionally, catalyzes the addition of fucose in alpha 1-6 linkage to the first GlcNAc residue, next to the peptide chains in N-glycans. The addition is prevented if the GlcNAc residue is already fucosylated. Involved in susceptibility to the nematotoxic C.cinerea galectin Cgl2, likely by contributing to the synthesis of core alpha-1,6-fucosylated N-glycans to which Cgl2 binds. The sequence is that of Alpha-(1,6)-fucosyltransferase from Caenorhabditis elegans.